The chain runs to 495 residues: Lanosterol 14-alpha demethylase erg11 (495 aa).

A helical membrane pass occupies residues 2–22 (AFSLVSILLSIALAWYVGYII). Residue C442 coordinates heme.

It belongs to the cytochrome P450 family. As to quaternary structure, interacts with dap1. Heme serves as cofactor.

Its subcellular location is the endoplasmic reticulum. The protein localises to the membrane. The enzyme catalyses a 14alpha-methyl steroid + 3 reduced [NADPH--hemoprotein reductase] + 3 O2 = a Delta(14) steroid + formate + 3 oxidized [NADPH--hemoprotein reductase] + 4 H2O + 4 H(+). The catalysed reaction is a 14alpha-methyl steroid + reduced [NADPH--hemoprotein reductase] + O2 = a 14alpha-hydroxymethyl steroid + oxidized [NADPH--hemoprotein reductase] + H2O + H(+). It catalyses the reaction a 14alpha-hydroxymethyl steroid + reduced [NADPH--hemoprotein reductase] + O2 = a 14alpha-formyl steroid + oxidized [NADPH--hemoprotein reductase] + 2 H2O + H(+). It carries out the reaction a 14alpha-formyl steroid + reduced [NADPH--hemoprotein reductase] + O2 = a Delta(14) steroid + formate + oxidized [NADPH--hemoprotein reductase] + H2O + 2 H(+). The enzyme catalyses lanosterol + 3 reduced [NADPH--hemoprotein reductase] + 3 O2 = 4,4-dimethyl-5alpha-cholesta-8,14,24-trien-3beta-ol + formate + 3 oxidized [NADPH--hemoprotein reductase] + 4 H2O + 4 H(+). The catalysed reaction is lanosterol + reduced [NADPH--hemoprotein reductase] + O2 = 32-hydroxylanosterol + oxidized [NADPH--hemoprotein reductase] + H2O + H(+). It catalyses the reaction 32-hydroxylanosterol + reduced [NADPH--hemoprotein reductase] + O2 = 32-oxolanosterol + oxidized [NADPH--hemoprotein reductase] + 2 H2O + H(+). It carries out the reaction 32-oxolanosterol + reduced [NADPH--hemoprotein reductase] + O2 = 4,4-dimethyl-5alpha-cholesta-8,14,24-trien-3beta-ol + formate + oxidized [NADPH--hemoprotein reductase] + H2O + 2 H(+). The enzyme catalyses eburicol + 3 reduced [NADPH--hemoprotein reductase] + 3 O2 = 14-demethyleburicol + formate + 3 oxidized [NADPH--hemoprotein reductase] + 4 H2O + 4 H(+). The catalysed reaction is eburicol + reduced [NADPH--hemoprotein reductase] + O2 = 32-hydroxyeburicol + oxidized [NADPH--hemoprotein reductase] + H2O + H(+). It catalyses the reaction 32-hydroxyeburicol + reduced [NADPH--hemoprotein reductase] + O2 = 32-oxoeburicol + oxidized [NADPH--hemoprotein reductase] + 2 H2O + H(+). It carries out the reaction 32-oxoeburicol + reduced [NADPH--hemoprotein reductase] + O2 = 14-demethyleburicol + formate + oxidized [NADPH--hemoprotein reductase] + H2O + 2 H(+). It functions in the pathway steroid biosynthesis; zymosterol biosynthesis; zymosterol from lanosterol: step 1/6. Its pathway is steroid metabolism; ergosterol biosynthesis. Its function is as follows. Sterol 14alpha-demethylase that plays a critical role in the third module of ergosterol biosynthesis pathway, being ergosterol the major sterol component in fungal membranes that participates in a variety of functions. The third module or late pathway involves the ergosterol synthesis itself through consecutive reactions that mainly occur in the endoplasmic reticulum (ER) membrane. In filamentous fungi, during the initial step of this module, lanosterol (lanosta-8,24-dien-3beta-ol) can be metabolized to eburicol. Sterol 14alpha-demethylase catalyzes the three-step oxidative removal of the 14alpha-methyl group (C-32) of both these sterols in the form of formate, and converts eburicol and lanosterol to 14-demethyleburicol (4,4,24-trimethylergosta-8,14,24(28)-trienol) and 4,4-dimethyl-5alpha-cholesta-8,14,24-trien-3beta-ol, respectively, which are further metabolized by other enzymes in the pathway to ergosterol. Can also use substrates not intrinsic to fungi, such as 24,25-dihydrolanosterol (DHL), producing 4,4-dimethyl-8,14-cholestadien-3-beta-ol, but at lower rates than the endogenous substrates. This Schizosaccharomyces pombe (strain 972 / ATCC 24843) (Fission yeast) protein is Lanosterol 14-alpha demethylase erg11.